We begin with the raw amino-acid sequence, 502 residues long: Glycerol kinase (502 aa).

Position 14 (threonine 14) interacts with ADP. Residues threonine 14, threonine 15, and serine 16 each coordinate ATP. Residue threonine 14 coordinates sn-glycerol 3-phosphate. Arginine 18 contributes to the ADP binding site. Positions 84, 85, 136, and 246 each coordinate sn-glycerol 3-phosphate. The glycerol site is built by arginine 84, glutamate 85, tyrosine 136, aspartate 246, and glutamine 247. ADP-binding residues include threonine 268 and glycine 311. ATP is bound by residues threonine 268, glycine 311, glutamine 315, and glycine 412. 2 residues coordinate ADP: glycine 412 and asparagine 416.

This sequence belongs to the FGGY kinase family. In terms of assembly, homotetramer and homodimer (in equilibrium). Heterodimer with EIIA-Glc. Binds 1 zinc ion per glycerol kinase EIIA-Glc dimer. The zinc ion is important for dimerization.

It carries out the reaction glycerol + ATP = sn-glycerol 3-phosphate + ADP + H(+). It functions in the pathway polyol metabolism; glycerol degradation via glycerol kinase pathway; sn-glycerol 3-phosphate from glycerol: step 1/1. With respect to regulation, activity of this regulatory enzyme is affected by several metabolites. Allosterically and non-competitively inhibited by fructose 1,6-bisphosphate (FBP) and unphosphorylated phosphocarrier protein EIIA-Glc (III-Glc), an integral component of the bacterial phosphotransferase (PTS) system. In terms of biological role, key enzyme in the regulation of glycerol uptake and metabolism. Catalyzes the phosphorylation of glycerol to yield sn-glycerol 3-phosphate. The protein is Glycerol kinase of Citrobacter koseri (strain ATCC BAA-895 / CDC 4225-83 / SGSC4696).